The following is a 404-amino-acid chain: Plasma serine protease inhibitor (404 aa).

A signal peptide spans 1 to 19 (MRLCLFLCLVLLGPRMATL). The propeptide at 20-24 (RRSQK) is removed in mature form. Residues Thr-35 and Thr-36 are each glycosylated (O-linked (GalNAc...) threonine). N-linked (GlcNAc...) asparagine glycans are attached at residues Asn-245, Asn-258, and Asn-334.

It belongs to the serpin family. In terms of assembly, forms protease inhibiting heterodimers in extracellular body fluids with serine proteases such as activated protein C/coagulation factor V/F5, acrosin/ACR, chymotrypsinogen B/CTRB1, prothrombin/F2, factor Xa/F10, factor XI/F11, kallikrein/KLKB1, tissue kallikrein, trypsin/PRSS1, prostate specific antigen/KLK3, tissue plasminogen activator/PLAT and urinary plasminogen activator/PLAU. Forms membrane-anchored serine proteases inhibiting heterodimers with TMPRSS7 and TMPRSS11E. Interacts with SEMG2. Post-translationally, N-glycosylated; glycans consist of a mixture of sialylated bi- (including sialyl-Lewis X epitopes), tri- and tetra-antennary complex-type chains; affects the maximal heparin- and thrombomodulin-enhanced rates of thrombin inhibition. O-glycosylated; further modified with 2 sialic acid residues. Proteolytically cleaved at the N-terminus; inhibits slightly the heparin- and thrombomodulin-enhanced rates of thrombin inhibition. N- and O-glycosylated. Proteolytically cleaved. Inhibition of proteases is accompanied by formation of a stable enzyme-inhibitor complex and by degradation of the serpin to lower molecular weight derivatives. In terms of tissue distribution, expressed strongly in the liver, and moderately in the kidney and testis, but not in other tissues tested.

The protein resides in the secreted. The protein localises to the extracellular space. Its activity is regulated as follows. Its inhibitory activity is greatly enhanced in the presence of glycosaminoglycans, heparin, thrombomodulin and phospholipids vesicles. Heparin-dependent serine protease inhibitor acting in body fluids and secretions. Inactivates serine proteases by binding irreversibly to their serine activation site. Involved in the regulation of intravascular and extravascular proteolytic activities. Plays hemostatic roles in the blood plasma. Acts as a procoagulant and pro-inflammatory factor by inhibiting the anticoagulant activated protein C factor as well as the generation of activated protein C factor by the thrombin/thrombomodulin complex. Acts as an anticoagulant factor by inhibiting blood coagulation factors like prothrombin, factor XI, factor Xa, plasma kallikrein and fibrinolytic enzymes such as tissue- and urinary-type plasminogen activators. In seminal plasma, inactivates several serine proteases implicated in the reproductive system. Inhibits the serpin acrosin; indirectly protects component of the male genital tract from being degraded by excessive released acrosin. Inhibits tissue- and urinary-type plasminogen activator, prostate-specific antigen and kallikrein activities; has a control on the sperm motility and fertilization. Inhibits the activated protein C-catalyzed degradation of SEMG1 and SEMG2; regulates the degradation of semenogelin during the process of transfer of spermatozoa from the male reproductive tract into the female tract. In urine, inhibits urinary-type plasminogen activator and kallikrein activities. Inactivates membrane-anchored serine proteases activities such as MPRSS7 and TMPRSS11E. Inhibits urinary-type plasminogen activator-dependent tumor cell invasion and metastasis. May also play a non-inhibitory role in seminal plasma and urine as a hydrophobic hormone carrier by its binding to retinoic acid. The polypeptide is Plasma serine protease inhibitor (SERPINA5) (Bos taurus (Bovine)).